We begin with the raw amino-acid sequence, 465 residues long: ATP-dependent rRNA helicase rrp3 (465 aa).

Positions Met-1–Glu-22 are enriched in basic and acidic residues. Residues Met-1 to Ala-44 form a disordered region. Positions Thr-23–Asn-36 are enriched in low complexity. Residues Lys-46–Gln-74 carry the Q motif motif. The Helicase ATP-binding domain maps to Ile-77–Val-248. Ala-90 to Thr-97 serves as a coordination point for ATP. Residues Asp-196–Asp-199 carry the DEAD box motif. One can recognise a Helicase C-terminal domain in the interval Tyr-275 to Phe-419. The span at Arg-442–Arg-453 shows a compositional bias: basic residues. A disordered region spans residues Arg-442–Tyr-465. The segment covering Lys-454–Tyr-465 has biased composition (basic and acidic residues).

Belongs to the DEAD box helicase family. DDX47/RRP3 subfamily. In terms of assembly, interacts with the SSU processome.

The protein localises to the nucleus. The catalysed reaction is ATP + H2O = ADP + phosphate + H(+). ATP-dependent rRNA helicase required for pre-ribosomal RNA processing. Involved in the maturation of the 35S-pre-rRNA and to its cleavage to mature 18S rRNA. This chain is ATP-dependent rRNA helicase rrp3, found in Schizosaccharomyces pombe (strain 972 / ATCC 24843) (Fission yeast).